Here is a 406-residue protein sequence, read N- to C-terminus: Probable sodium/metabolite cotransporter BASS1, chloroplastic (406 aa).

The N-terminal 64 residues, 1-64 (MPLLRRPPAA…RHLCGIPSSR (64 aa)), are a transit peptide targeting the chloroplast. 9 helical membrane-spanning segments follow: residues 98 to 118 (VGEV…AVAL), 123 to 143 (AFLW…MLGM), 152 to 172 (LKTA…QYSV), 187 to 209 (PSYY…SNIV), 217 to 237 (VALS…LTPL), 252 to 272 (MGLF…GALL), 278 to 298 (GLVQ…VAVL), 315 to 335 (LQVV…GYVL), and 376 to 396 (VPCA…AGIW).

The protein belongs to the bile acid:sodium symporter (BASS) (TC 2.A.28) family.

The protein resides in the membrane. It is found in the plastid. It localises to the chloroplast envelope. In terms of biological role, may function as sodium-coupled metabolite transporter across the chloroplast envelope. This is Probable sodium/metabolite cotransporter BASS1, chloroplastic (BASS1) from Oryza sativa subsp. japonica (Rice).